Here is a 164-residue protein sequence, read N- to C-terminus: MINALGLLEVDGMVAAVDAADAMLKAANVRLLSHQVLDPGRLTLVVEGDLAACRAALDAGSAAAQRTGRVISRKEIGRPEEDTQWLIGGFARATTPTEKAPQVPATPEFAEALLALLASVRQGMTAGEVAAHFGWPLEQARNVLEQLFSDGALRKRSSRYRIKN.

The BMC domain occupies 4 to 88; sequence ALGLLEVDGM…PEEDTQWLIG (85 aa). Residues 108 to 164 form the EutK-Ctail domain; that stretch reads EFAEALLALLASVRQGMTAGEVAAHFGWPLEQARNVLEQLFSDGALRKRSSRYRIKN.

The protein belongs to the bacterial microcompartments protein family. As to quaternary structure, monomeric in solution.

Its subcellular location is the bacterial microcompartment. It functions in the pathway amine and polyamine degradation; ethanolamine degradation. In terms of biological role, a component of the bacterial microcompartment (BMC) shell dedicated to ethanolamine degradation. Expression of eutK, eutL, eutM, eutN, eutS (eutSMNLK) in E.coli leads to formation of a single BMC. Coexpression of eutQ with eutSMNLK permits E.coli to make cells with more than one mobile BMC, as is usual in vivo. Functionally, the ethanolamine (EA) catabolic bacterial microcompartment (BMC) probably concentrates low levels of ethanolamine catabolic enzymes, concentrates volatile reaction intermediates, keeps the level of toxic acetaldehyde low, generates enough acetyl-CoA to support cell growth, and maintains a pool of free coenzyme A (CoA) and NAD. Deletion of BMC genes (eutK, eutL, eutM) restores growth of eutD deletions, suggesting there are dedicated pools of coenzyme A (CoA) and NAD in the BMC. Its function is as follows. Expression of the eut operon allows this bacteria to use ethanolamine as a carbon, nitrogen and energy source. It relies on cobalamin (vitamin B12) both as a cofactor for the ethanolamine ammonia-lyase (EAL) activity and to induce the operon. EA enhances bacterial survival in macrophages in a concentration-dependent manner, suggesting it is an important nutrient during infection. In Salmonella typhimurium (strain LT2 / SGSC1412 / ATCC 700720), this protein is Bacterial microcompartment shell protein EutK (eutK).